The sequence spans 874 residues: Alanine--tRNA ligase (874 aa).

Residues His-563, His-567, Cys-665, and His-669 each coordinate Zn(2+).

This sequence belongs to the class-II aminoacyl-tRNA synthetase family. Zn(2+) is required as a cofactor.

The protein resides in the cytoplasm. The enzyme catalyses tRNA(Ala) + L-alanine + ATP = L-alanyl-tRNA(Ala) + AMP + diphosphate. Catalyzes the attachment of alanine to tRNA(Ala) in a two-step reaction: alanine is first activated by ATP to form Ala-AMP and then transferred to the acceptor end of tRNA(Ala). Also edits incorrectly charged Ser-tRNA(Ala) and Gly-tRNA(Ala) via its editing domain. In Histophilus somni (strain 2336) (Haemophilus somnus), this protein is Alanine--tRNA ligase.